The chain runs to 541 residues: NAD(P)H-quinone oxidoreductase subunit 2 A, chloroplastic (541 aa).

A run of 14 helical transmembrane segments spans residues 24–44 (LLLF…GLIL), 57–77 (IPWL…ALLF), 99–119 (IFQF…VEYI), 124–144 (MAIT…MFLC), 149–169 (FITI…LSGY), 183–203 (YLLM…WLYG), 227–247 (PGIS…LSPA), 289–309 (ILSP…AASA), 326–346 (WHLL…LIAI), 354–374 (MLAY…IVGD), 385–405 (YMLF…LFGL), 426–446 (ALSL…AGFF), 449–469 (LYLF…IGLL), and 515–535 (MIVC…IIAI).

Belongs to the complex I subunit 2 family. In terms of assembly, NDH is composed of at least 16 different subunits, 5 of which are encoded in the nucleus.

It is found in the plastid. Its subcellular location is the chloroplast thylakoid membrane. The enzyme catalyses a plastoquinone + NADH + (n+1) H(+)(in) = a plastoquinol + NAD(+) + n H(+)(out). The catalysed reaction is a plastoquinone + NADPH + (n+1) H(+)(in) = a plastoquinol + NADP(+) + n H(+)(out). NDH shuttles electrons from NAD(P)H:plastoquinone, via FMN and iron-sulfur (Fe-S) centers, to quinones in the photosynthetic chain and possibly in a chloroplast respiratory chain. The immediate electron acceptor for the enzyme in this species is believed to be plastoquinone. Couples the redox reaction to proton translocation, and thus conserves the redox energy in a proton gradient. In Coffea arabica (Arabian coffee), this protein is NAD(P)H-quinone oxidoreductase subunit 2 A, chloroplastic.